A 252-amino-acid chain; its full sequence is Probable transcriptional regulatory protein Cagg_2594 (252 aa).

A compositionally biased stretch (basic residues) spans 1–14; that stretch reads MSGHSKWHTIRRAK. Residues 1–22 form a disordered region; the sequence is MSGHSKWHTIRRAKSANDQRRG.

The protein belongs to the TACO1 family.

The protein localises to the cytoplasm. The protein is Probable transcriptional regulatory protein Cagg_2594 of Chloroflexus aggregans (strain MD-66 / DSM 9485).